The following is a 114-amino-acid chain: Large ribosomal subunit protein uL22 (114 aa).

Belongs to the universal ribosomal protein uL22 family. In terms of assembly, part of the 50S ribosomal subunit.

In terms of biological role, this protein binds specifically to 23S rRNA; its binding is stimulated by other ribosomal proteins, e.g. L4, L17, and L20. It is important during the early stages of 50S assembly. It makes multiple contacts with different domains of the 23S rRNA in the assembled 50S subunit and ribosome. Functionally, the globular domain of the protein is located near the polypeptide exit tunnel on the outside of the subunit, while an extended beta-hairpin is found that lines the wall of the exit tunnel in the center of the 70S ribosome. The polypeptide is Large ribosomal subunit protein uL22 (Alcanivorax borkumensis (strain ATCC 700651 / DSM 11573 / NCIMB 13689 / SK2)).